A 363-amino-acid polypeptide reads, in one-letter code: tRNA-specific 2-thiouridylase MnmA (363 aa).

Residues 6 to 13 and L32 each bind ATP; that span reads AMSGGVDS. Residue C101 is the Nucleophile of the active site. A disulfide bridge links C101 with C193. Residue G125 coordinates ATP. The tract at residues 143–145 is interaction with tRNA; it reads KDQ. Residue C193 is the Cysteine persulfide intermediate of the active site.

The protein belongs to the MnmA/TRMU family.

The protein resides in the cytoplasm. The enzyme catalyses S-sulfanyl-L-cysteinyl-[protein] + uridine(34) in tRNA + AH2 + ATP = 2-thiouridine(34) in tRNA + L-cysteinyl-[protein] + A + AMP + diphosphate + H(+). In terms of biological role, catalyzes the 2-thiolation of uridine at the wobble position (U34) of tRNA, leading to the formation of s(2)U34. The polypeptide is tRNA-specific 2-thiouridylase MnmA (Mycobacterium marinum (strain ATCC BAA-535 / M)).